The primary structure comprises 39 residues: Bacteriocin SRCAM 602 (39 aa).

This sequence belongs to the bacteriocin class IIA/YGNGV family.

The protein resides in the secreted. Its function is as follows. Bacteriocin with antibacterial activity against C.jejuni. The polypeptide is Bacteriocin SRCAM 602 (Paenibacillus polymyxa (Bacillus polymyxa)).